A 369-amino-acid polypeptide reads, in one-letter code: 2-aminoethylphosphonate--pyruvate transaminase (369 aa).

Lysine 193 carries the N6-(pyridoxal phosphate)lysine modification.

The protein belongs to the class-V pyridoxal-phosphate-dependent aminotransferase family. PhnW subfamily. As to quaternary structure, homodimer. It depends on pyridoxal 5'-phosphate as a cofactor.

The enzyme catalyses (2-aminoethyl)phosphonate + pyruvate = phosphonoacetaldehyde + L-alanine. Its function is as follows. Involved in phosphonate degradation. This Burkholderia pseudomallei (strain K96243) protein is 2-aminoethylphosphonate--pyruvate transaminase.